Here is a 95-residue protein sequence, read N- to C-terminus: MESRDIILRPVVTEATMATMDDKRYTFDVDVRATKTQVKHAIEDIFDVKVVKVNVMNLKGKKKRQGRYEGYTKKRRKAIVSLSADSKEIKLFNEE.

This sequence belongs to the universal ribosomal protein uL23 family. In terms of assembly, part of the 50S ribosomal subunit. Contacts protein L29, and trigger factor when it is bound to the ribosome.

In terms of biological role, one of the early assembly proteins it binds 23S rRNA. One of the proteins that surrounds the polypeptide exit tunnel on the outside of the ribosome. Forms the main docking site for trigger factor binding to the ribosome. This Levilactobacillus brevis (strain ATCC 367 / BCRC 12310 / CIP 105137 / JCM 1170 / LMG 11437 / NCIMB 947 / NCTC 947) (Lactobacillus brevis) protein is Large ribosomal subunit protein uL23.